The following is a 366-amino-acid chain: Chorismate synthase (366 aa).

Arg-48 and Arg-54 together coordinate NADP(+). FMN-binding positions include 125 to 127 (RSS), 237 to 238 (NA), Gly-277, 292 to 296 (KPTSS), and Arg-318.

It belongs to the chorismate synthase family. Homotetramer. FMNH2 serves as cofactor.

The enzyme catalyses 5-O-(1-carboxyvinyl)-3-phosphoshikimate = chorismate + phosphate. The protein operates within metabolic intermediate biosynthesis; chorismate biosynthesis; chorismate from D-erythrose 4-phosphate and phosphoenolpyruvate: step 7/7. Catalyzes the anti-1,4-elimination of the C-3 phosphate and the C-6 proR hydrogen from 5-enolpyruvylshikimate-3-phosphate (EPSP) to yield chorismate, which is the branch point compound that serves as the starting substrate for the three terminal pathways of aromatic amino acid biosynthesis. This reaction introduces a second double bond into the aromatic ring system. This is Chorismate synthase from Acidovorax ebreus (strain TPSY) (Diaphorobacter sp. (strain TPSY)).